A 225-amino-acid chain; its full sequence is Probable septum site-determining protein MinC (225 aa).

Residues 87–112 form a disordered region; that stretch reads PTHMASPQGNSSKTRSSDTQPKPKTP. The span at 91–108 shows a compositional bias: polar residues; the sequence is ASPQGNSSKTRSSDTQPK.

It belongs to the MinC family. As to quaternary structure, interacts with MinD and FtsZ.

In terms of biological role, cell division inhibitor that blocks the formation of polar Z ring septums. Rapidly oscillates between the poles of the cell to destabilize FtsZ filaments that have formed before they mature into polar Z rings. Prevents FtsZ polymerization. This Prochlorococcus marinus (strain MIT 9313) protein is Probable septum site-determining protein MinC.